Here is a 346-residue protein sequence, read N- to C-terminus: 3-keto-steroid reductase ERG27 (346 aa).

Residues leucine 19, threonine 42, and lysine 48 each contribute to the NADP(+) site. Residues serine 182 and tyrosine 205 each act as proton donor in the active site. Positions 205, 209, and 241 each coordinate NADP(+). The Lowers pKa of active site Tyr role is filled by lysine 209. The chain crosses the membrane as a helical span at residues 242-262 (FSFFQYLNVFTYYGMLFLFYL). Asparagine 272 carries N-linked (GlcNAc...) asparagine glycosylation.

It belongs to the short-chain dehydrogenases/reductases (SDR) family. ERG27 subfamily. Heterotetramer of ERG25, ERG26, ERG27 and ERG28. ERG28 acts as a scaffold to tether ERG27 and other 4,4-demethylation-related enzymes, forming a demethylation enzyme complex, in the endoplasmic reticulum. Interacts with ERG25 and ERG28. Also interacts with ERG7, but only in lipid particles.

Its subcellular location is the endoplasmic reticulum membrane. It is found in the lipid droplet. It carries out the reaction 3-dehydro-4alpha-methylzymosterol + NADPH + H(+) = 4alpha-methylzymosterol + NADP(+). Its pathway is steroid biosynthesis; zymosterol biosynthesis; zymosterol from lanosterol: step 5/6. 3-keto-steroid reductase; part of the third module of ergosterol biosynthesis pathway that includes the late steps of the pathway. ERG27 is a catalytic component of the C-4 demethylation complex that catalyzes the reduction of the keto group on the C-3. The third module or late pathway involves the ergosterol synthesis itself through consecutive reactions that mainly occur in the endoplasmic reticulum (ER) membrane. Firstly, the squalene synthase ERG9 catalyzes the condensation of 2 farnesyl pyrophosphate moieties to form squalene, which is the precursor of all steroids. Squalene synthase is crucial for balancing the incorporation of farnesyl diphosphate (FPP) into sterol and nonsterol isoprene synthesis. Secondly, the squalene epoxidase ERG1 catalyzes the stereospecific oxidation of squalene to (S)-2,3-epoxysqualene, which is considered to be a rate-limiting enzyme in steroid biosynthesis. Then, the lanosterol synthase ERG7 catalyzes the cyclization of (S)-2,3 oxidosqualene to lanosterol, a reaction that forms the sterol core. In the next steps, lanosterol is transformed to zymosterol through a complex process involving various demethylation, reduction and desaturation reactions. The lanosterol 14-alpha-demethylase ERG11 (also known as CYP51) catalyzes C14-demethylation of lanosterol to produce 4,4'-dimethyl cholesta-8,14,24-triene-3-beta-ol, which is critical for ergosterol biosynthesis. The C-14 reductase ERG24 reduces the C14=C15 double bond of 4,4-dimethyl-cholesta-8,14,24-trienol to produce 4,4-dimethyl-cholesta-8,24-dienol. 4,4-dimethyl-cholesta-8,24-dienol is substrate of the C-4 demethylation complex ERG25-ERG26-ERG27 in which ERG25 catalyzes the three-step monooxygenation required for the demethylation of 4,4-dimethyl and 4alpha-methylsterols, ERG26 catalyzes the oxidative decarboxylation that results in a reduction of the 3-beta-hydroxy group at the C-3 carbon to an oxo group, and ERG27 is responsible for the reduction of the keto group on the C-3. ERG28 has a role as a scaffold to help anchor ERG25, ERG26 and ERG27 to the endoplasmic reticulum and ERG29 regulates the activity of the iron-containing C4-methylsterol oxidase ERG25. Then, the sterol 24-C-methyltransferase ERG6 catalyzes the methyl transfer from S-adenosyl-methionine to the C-24 of zymosterol to form fecosterol. The C-8 sterol isomerase ERG2 catalyzes the reaction which results in unsaturation at C-7 in the B ring of sterols and thus converts fecosterol to episterol. The sterol-C5-desaturase ERG3 then catalyzes the introduction of a C-5 double bond in the B ring to produce 5-dehydroepisterol. The C-22 sterol desaturase ERG5 further converts 5-dehydroepisterol into ergosta-5,7,22,24(28)-tetraen-3beta-ol by forming the C-22(23) double bond in the sterol side chain. Finally, ergosta-5,7,22,24(28)-tetraen-3beta-ol is substrate of the C-24(28) sterol reductase ERG4 to produce ergosterol. In terms of biological role, facilitates the association of ERG7 with lipid particles preventing its digestion in the endoplasmic reticulum and the lipid particles. This Candida albicans (Yeast) protein is 3-keto-steroid reductase ERG27.